A 107-amino-acid polypeptide reads, in one-letter code: MKTYRIRKDDKVMVIAGKDKGKVGKILKILPKRNAVLVEKVNQVKRHTKANPYAKTPGGIIEKEAPLDISNVALLCEGCAKPAKVGYKYTADGKKVRFCKKCNHEIA.

Belongs to the universal ribosomal protein uL24 family. In terms of assembly, part of the 50S ribosomal subunit.

Its function is as follows. One of two assembly initiator proteins, it binds directly to the 5'-end of the 23S rRNA, where it nucleates assembly of the 50S subunit. One of the proteins that surrounds the polypeptide exit tunnel on the outside of the subunit. The chain is Large ribosomal subunit protein uL24 from Solidesulfovibrio magneticus (strain ATCC 700980 / DSM 13731 / RS-1) (Desulfovibrio magneticus).